The sequence spans 334 residues: MSLQIDQIALHQLIKRDEQTLDVVLRDSLLATDQVVEDMMAELHRVYSAKSKAYGLFNEESELAEALRHQRKGDEDFLGFSRAATARLRDELAKYPFAEGGTVLFCQYRYLAVEYLLIAVLNSCNSMSVNDNLDLNTTHYLDIPHADIVARIDLTEWETNPESSRYLTFLKGRVGRKVSDFFMDFLAASEGMNAKVQNKGLLQAVDDYCESGELNKDERQAYRQQVYNYCNEQLQAGEEIEIKALSQALPTFGEQNFQQFSQEQEYELEESFPADRSTLRQLTKFAGSGGGLTINFDAMLFGERIFWDPATDTLTIKGTPPNLRDQLQRRSSGH.

The protein belongs to the YejK family.

The protein resides in the cytoplasm. It is found in the nucleoid. The polypeptide is Nucleoid-associated protein plu2870 (Photorhabdus laumondii subsp. laumondii (strain DSM 15139 / CIP 105565 / TT01) (Photorhabdus luminescens subsp. laumondii)).